Consider the following 69-residue polypeptide: UPF0435 protein SH1076 (69 aa).

It belongs to the UPF0435 family.

This Staphylococcus haemolyticus (strain JCSC1435) protein is UPF0435 protein SH1076.